A 430-amino-acid polypeptide reads, in one-letter code: Enolase (430 aa).

Gln-163 lines the (2R)-2-phosphoglycerate pocket. Glu-205 serves as the catalytic Proton donor. Asp-242, Glu-285, and Asp-312 together coordinate Mg(2+). 4 residues coordinate (2R)-2-phosphoglycerate: Lys-337, Arg-366, Ser-367, and Lys-388. Lys-337 serves as the catalytic Proton acceptor.

The protein belongs to the enolase family. Mg(2+) is required as a cofactor.

The protein resides in the cytoplasm. It localises to the secreted. Its subcellular location is the cell surface. It catalyses the reaction (2R)-2-phosphoglycerate = phosphoenolpyruvate + H2O. It participates in carbohydrate degradation; glycolysis; pyruvate from D-glyceraldehyde 3-phosphate: step 4/5. Functionally, catalyzes the reversible conversion of 2-phosphoglycerate (2-PG) into phosphoenolpyruvate (PEP). It is essential for the degradation of carbohydrates via glycolysis. The protein is Enolase of Rhodopseudomonas palustris (strain BisB18).